The chain runs to 148 residues: Endoribonuclease YbeY (148 aa).

The Zn(2+) site is built by His-113, His-117, and His-123.

This sequence belongs to the endoribonuclease YbeY family. Zn(2+) serves as cofactor.

Its subcellular location is the cytoplasm. Functionally, single strand-specific metallo-endoribonuclease involved in late-stage 70S ribosome quality control and in maturation of the 3' terminus of the 16S rRNA. The chain is Endoribonuclease YbeY from Borrelia turicatae (strain 91E135).